Here is a 368-residue protein sequence, read N- to C-terminus: Agmatine deiminase (368 aa).

Residue Cys357 is the Amidino-cysteine intermediate of the active site.

It belongs to the agmatine deiminase family. In terms of assembly, homodimer.

The catalysed reaction is agmatine + H2O = N-carbamoylputrescine + NH4(+). It participates in amine and polyamine biosynthesis; putrescine biosynthesis via agmatine pathway; N-carbamoylputrescine from agmatine: step 1/1. Functionally, mediates the hydrolysis of agmatine into N-carbamoylputrescine in the arginine decarboxylase (ADC) pathway of putrescine biosynthesis, a basic polyamine. The protein is Agmatine deiminase of Pseudomonas fluorescens (strain SBW25).